The chain runs to 632 residues: Palmitoyltransferase ZDHHC17 (632 aa).

Residues 1–304 (MQREEGFNTK…LKADKEFRQK (304 aa)) lie on the Cytoplasmic side of the membrane. The interval 11–305 (MADGPDEYDT…KADKEFRQKV (295 aa)) is necessary and sufficient for interaction with DNAJC5 and SNAP25. ANK repeat units lie at residues 51-86 (THID…VRQP), 89-118 (ENVT…IVDQ), 123-152 (LNST…DPSL), 156-185 (EGCS…DVDM), 189-219 (NGMT…SVNL), 224-253 (HKNT…NVDA), and 257-286 (KGES…AKGY). The next 2 helical transmembrane spans lie at 305–325 (VMLG…DLNI) and 326–346 (DSWL…QFLS). At 347 to 357 (KSFFDHSMHSA) the chain is on the cytoplasmic side. A helical transmembrane segment spans residues 358 to 378 (LPLGIYLATKFWMYVTWFFWF). Residues 379–381 (WND) are Lumenal-facing. Residues 382–402 (LNFLFIHLPFLANSVALFYNF) traverse the membrane as a helical segment. Residues 403–480 (GKSWKSDPGI…GNCVGAGNHR (78 aa)) lie on the Cytoplasmic side of the membrane. The region spanning 437-487 (IFCSTCLIRKPVRSKHCGVCNRCIAKFDHHCPWVGNCVGAGNHRYFMGYLF) is the DHHC domain. Cysteine 467 serves as the catalytic S-palmitoyl cysteine intermediate. Residues 481–501 (YFMGYLFFLLFMICWMIYGCI) traverse the membrane as a helical segment. The Lumenal segment spans residues 502–529 (SYWGLHCETTYTKDGFWTYITQIATCSP). A helical transmembrane segment spans residues 530-550 (WMFWMFLNSVFHFMWVAVLLM). Residues 551-632 (CQMYQISCLG…QISGSGYQLV (82 aa)) are Cytoplasmic-facing.

Belongs to the DHHC palmitoyltransferase family. AKR/ZDHHC17 subfamily. In terms of assembly, interacts (via ANK repeats) with numerous proteins (via the consensus sequence motif [VIAP]-[VIT]-x-x-Q-P). Interacts (via ANK repeats) with CLIP3. Interacts (via ANK repeats) with HTT; this interaction is inversely correlated to the length of the polyglutamine tract added to the huntingtin protein in Huntington disease. Interacts (via ANK repeats) with DNAJC5 (via C-terminus). Interacts (via ANK repeats) with MAP6. Interacts (via ANK repeats) with SNAP23. Interacts (via ANK repeats) with SNAP25. Interacts (via ANK repeats) with EVL. Interacts with SPRED1 and SPRED3. Interacts with GPM6A and OPTN. May interact (via ANK repeats) with SPRED2. May interact with NTRK1; may regulate its localization and function. In terms of processing, autopalmitoylated. Autopalmitoylation has a regulatory role in ZDHHC17-mediated Mg(2+) transport. As to expression, expressed in all brain regions. Expression is highest in the cortex, cerebellum, occipital lobe and caudate and lowest in the spinal cord. Expression is also seen in testis, pancreas, heart and kidney.

It localises to the golgi apparatus membrane. The protein resides in the cytoplasmic vesicle membrane. Its subcellular location is the presynaptic cell membrane. The enzyme catalyses L-cysteinyl-[protein] + hexadecanoyl-CoA = S-hexadecanoyl-L-cysteinyl-[protein] + CoA. The catalysed reaction is L-cysteinyl-[protein] + tetradecanoyl-CoA = S-tetradecanoyl-L-cysteinyl-[protein] + CoA. It carries out the reaction L-cysteinyl-[protein] + octadecanoyl-CoA = S-octadecanoyl-L-cysteinyl-[protein] + CoA. Palmitoyltransferase that catalyzes the addition of palmitate onto various protein substrates and is involved in a variety of cellular processes. Has no stringent fatty acid selectivity and in addition to palmitate can also transfer onto target proteins myristate from tetradecanoyl-CoA and stearate from octadecanoyl-CoA. Palmitoyltransferase specific for a subset of neuronal proteins, including SNAP25, DLG4/PSD95, GAD2, SYT1 and HTT. Also palmitoylates neuronal protein GPM6A as well as SPRED1 and SPRED3. Could also play a role in axonogenesis through the regulation of NTRK1 and the downstream ERK1/ERK2 signaling cascade. May be involved in the sorting or targeting of critical proteins involved in the initiating events of endocytosis at the plasma membrane. May play a role in Mg(2+) transport. Could also palmitoylate DNAJC5 and regulate its localization to the Golgi membrane. Palmitoylates CASP6, thereby preventing its dimerization and subsequent activation. The protein is Palmitoyltransferase ZDHHC17 of Homo sapiens (Human).